We begin with the raw amino-acid sequence, 128 residues long: Large ribosomal subunit protein bL12 (128 aa).

The protein belongs to the bacterial ribosomal protein bL12 family. In terms of assembly, homodimer. Part of the ribosomal stalk of the 50S ribosomal subunit. Forms a multimeric L10(L12)X complex, where L10 forms an elongated spine to which 2 to 4 L12 dimers bind in a sequential fashion. Binds GTP-bound translation factors.

Its function is as follows. Forms part of the ribosomal stalk which helps the ribosome interact with GTP-bound translation factors. Is thus essential for accurate translation. The protein is Large ribosomal subunit protein bL12 of Sulfurihydrogenibium sp. (strain YO3AOP1).